Consider the following 87-residue polypeptide: Small ribosomal subunit protein bS20 (87 aa).

Positions 1–24 (MANTAQARKRARQSVERNKHNSSL) are disordered.

Belongs to the bacterial ribosomal protein bS20 family.

Functionally, binds directly to 16S ribosomal RNA. The polypeptide is Small ribosomal subunit protein bS20 (Bordetella petrii (strain ATCC BAA-461 / DSM 12804 / CCUG 43448)).